A 359-amino-acid polypeptide reads, in one-letter code: Fc receptor-like A (359 aa).

An N-terminal signal peptide occupies residues 1 to 27 (MKLGCVLMAWALYLSLGVLWVAQMLLA). 2 consecutive Ig-like C2-type domains span residues 70 to 159 (PFHL…ETAS) and 170 to 257 (PAPI…PQLE). 2 cysteine pairs are disulfide-bonded: cysteine 99–cysteine 143 and cysteine 192–cysteine 240. Residues 259–313 (RVQGASSSAAPPTLNPAPQKSAAPGTAPEEAPGPLPPPPTPSSEDPGFSSPLGMP) are disordered. Low complexity predominate over residues 279 to 288 (SAAPGTAPEE). A compositionally biased stretch (pro residues) spans 289-299 (APGPLPPPPTP).

Monomer or homodimer; disulfide-linked. In terms of tissue distribution, expressed specifically in primary and secondary lymphoid tissues like lymph node, spleen and tonsil. Specifically expressed in B-cells with a high level in normal germinal center B-cells, centroblasts and in a subset of diffuse large B-cell lymphomas. Highly expressed in bone marrow B-cells and weakly in earlier B lineage cells. Expressed in pre-germinal and germinal center B-cells in secondary lymphoid tissues. Also expressed in melanoma and melanocytes.

The protein localises to the cytoplasm. In terms of biological role, may be implicated in B-cell differentiation and lymphomagenesis. The polypeptide is Fc receptor-like A (FCRLA) (Homo sapiens (Human)).